Reading from the N-terminus, the 465-residue chain is FeMo cofactor biosynthesis protein FixZ (465 aa).

Positions 1-36 (MSEPEIKVGKTSSALFDRAPMAPSMPGGRASSSHGL) are disordered. The 252-residue stretch at 61 to 312 (HHYFARMHXX…MRHCQQCRAD (252 aa)) folds into the Radical SAM core domain. [4Fe-4S] cluster is bound by residues Cys75 and Cys79. Tyr81 lines the S-adenosyl-L-methionine pocket. Cys82 contacts [4Fe-4S] cluster. Residues Gly129, Thr181, and Ile233 each contribute to the S-adenosyl-L-methionine site. Cys306 and Cys309 together coordinate [4Fe-4S] cluster.

This sequence belongs to the radical SAM superfamily. NifB family. [4Fe-4S] cluster is required as a cofactor.

It participates in cofactor biosynthesis; Fe-Mo cofactor biosynthesis. Its function is as follows. Involved in the biosynthesis of the iron-molybdenum cofactor (FeMo-co or M-cluster) found in the dinitrogenase enzyme of the nitrogenase complex in nitrogen-fixing microorganisms. Catalyzes the crucial step of radical SAM-dependent carbide insertion that occurs concomitant with the insertion of a 9th sulfur and the rearrangement/coupling of two [4Fe-4S] clusters into a [8Fe-9S-C] cluster, the precursor to the M-cluster. The chain is FeMo cofactor biosynthesis protein FixZ (fixZ) from Rhizobium leguminosarum.